The sequence spans 490 residues: Probable cytosol aminopeptidase (490 aa).

Mn(2+) contacts are provided by lysine 257 and aspartate 262. Lysine 269 is an active-site residue. Residues aspartate 281, aspartate 341, and glutamate 343 each contribute to the Mn(2+) site. Residue arginine 345 is part of the active site.

Belongs to the peptidase M17 family. Mn(2+) is required as a cofactor.

It is found in the cytoplasm. It carries out the reaction Release of an N-terminal amino acid, Xaa-|-Yaa-, in which Xaa is preferably Leu, but may be other amino acids including Pro although not Arg or Lys, and Yaa may be Pro. Amino acid amides and methyl esters are also readily hydrolyzed, but rates on arylamides are exceedingly low.. The enzyme catalyses Release of an N-terminal amino acid, preferentially leucine, but not glutamic or aspartic acids.. Its function is as follows. Presumably involved in the processing and regular turnover of intracellular proteins. Catalyzes the removal of unsubstituted N-terminal amino acids from various peptides. This chain is Probable cytosol aminopeptidase, found in Prochlorococcus marinus (strain MIT 9215).